The primary structure comprises 69 residues: Putative membrane protein insertion efficiency factor (69 aa).

It belongs to the UPF0161 family.

It is found in the cell inner membrane. Functionally, could be involved in insertion of integral membrane proteins into the membrane. This chain is Putative membrane protein insertion efficiency factor, found in Magnetococcus marinus (strain ATCC BAA-1437 / JCM 17883 / MC-1).